A 134-amino-acid chain; its full sequence is GSH-induced LITAF domain protein (134 aa).

The region spanning 33-113 (DPLGAPIQQT…CGNKVADFEK (81 aa)) is the LITAF domain. C53 and C56 together coordinate Zn(2+). A membrane-binding amphipathic helix region spans residues 68-88 (PGVAAVVACMMPFMLGFCFLC). 2 residues coordinate Zn(2+): C101 and C104.

It belongs to the CDIP1/LITAF family. In terms of assembly, interacts (via N- and C-terminal) with MIEL1 and LSD1 (via N-terminus).

The protein localises to the cell membrane. In terms of biological role, acts as a membrane anchor, bringing other regulators of programmed cell death (PCD) to the plasma membrane. Negatively regulates hypersensitive cell death. In Arabidopsis thaliana (Mouse-ear cress), this protein is GSH-induced LITAF domain protein.